The primary structure comprises 230 residues: Thymidylate kinase (230 aa).

20 to 27 (GGEGAGKS) contributes to the ATP binding site.

Belongs to the thymidylate kinase family.

The catalysed reaction is dTMP + ATP = dTDP + ADP. In terms of biological role, phosphorylation of dTMP to form dTDP in both de novo and salvage pathways of dTTP synthesis. This is Thymidylate kinase from Rhodopseudomonas palustris (strain BisB18).